We begin with the raw amino-acid sequence, 429 residues long: MKKKPFYKVLYVQVIFAIIVGVILGHYYPALATDMKPLGDGFIKLIKMVIGPIIFCTVVTGIAGMEDMKKVGRVGGKALLYFEIVSTFALLLGLAATHILRPGVGFNIDPATLDGKAVASYAAKAHGQSTVDFLMHIIPNTMVDAFAQGEILQILLIALLFGSVLAHLGERGKVVTDFIDGLTRVLFGIVHIVTKLAPIGAFGAMAFTIGKYGVGSLVPLLKLIGTFYLTSVVFVLVVLGTIARFTGFSIIRFVSYIKEELLIVLGTSSSEAALPQLMEKLEKAGCSRSVVGLVVPTGYSFNLDGTNIYMTMAVLFIAQATNIELTWMQQLTLLAVAMLTSKGASGVTGAGFITLAATLAVVPTIPLSGMVLILGIDRFMSECRALTNIVGNGVATVVVSAWEKELDRNKLRQALTGGGEVTTTETAGV.

Transmembrane regions (helical) follow at residues 9–29, 45–65, 79–99, 149–169, 185–205, 223–243, 308–328, and 356–376; these read VLYV…HYYP, LIKM…IAGM, LLYF…ATHI, GEIL…AHLG, VLFG…FGAM, LIGT…GTIA, IYMT…LTWM, and AATL…ILGI.

The protein belongs to the dicarboxylate/amino acid:cation symporter (DAACS) (TC 2.A.23) family.

The protein localises to the cell inner membrane. Functionally, responsible for the transport of dicarboxylates such as succinate, fumarate, and malate from the periplasm across the membrane. This chain is C4-dicarboxylate transport protein, found in Burkholderia lata (strain ATCC 17760 / DSM 23089 / LMG 22485 / NCIMB 9086 / R18194 / 383).